A 497-amino-acid chain; its full sequence is Signal recognition particle subunit SRP54 1 (497 aa).

The interval M1–L295 is G-domain. Residues G108–T115, D190–R194, and T248–D251 contribute to the GTP site. The interval G296–D497 is M-domain.

This sequence belongs to the GTP-binding SRP family. SRP54 subfamily. In terms of assembly, component of a signal recognition particle (SRP) complex that consists of a 7SL RNA molecule of 300 nucleotides and six protein subunits: SRP72, SRP68, SRP54, SRP19, SRP14 and SRP9.

Its subcellular location is the cytoplasm. It is found in the endoplasmic reticulum. It catalyses the reaction GTP + H2O = GDP + phosphate + H(+). Its function is as follows. Component of the signal recognition particle (SRP) complex, a ribonucleoprotein complex that mediates the cotranslational targeting of secretory and membrane proteins to the endoplasmic reticulum (ER). As part of the SRP complex, associates with the SRP receptor (SR) component SRPRA to target secretory proteins to the endoplasmic reticulum membrane. Binds to the signal sequence of presecretory proteins when they emerge from the ribosomes. Displays basal GTPase activity, and stimulates reciprocal GTPase activation of the SR subunit SRPRA. Forms a guanosine 5'-triphosphate (GTP)-dependent complex with the SR subunit SRPRA. SR compaction and GTPase mediated rearrangement of SR drive SRP-mediated cotranslational protein translocation into the ER. Requires the presence of SRP9/SRP14 and/or SRP19 to stably interact with RNA. The chain is Signal recognition particle subunit SRP54 1 (SRP54-1) from Hordeum vulgare (Barley).